A 228-amino-acid chain; its full sequence is Probable endo-1,4-beta-xylanase A (228 aa).

A signal peptide spans 1–18 (MVSFSYLLLACSAIGALA). The N-linked (GlcNAc...) asparagine glycan is linked to Asn29. Residues 40–228 (AGTPSSTGWN…SSGSASITVY (189 aa)) enclose the GH11 domain. Glu124 acts as the Nucleophile in catalysis. The active-site Proton donor is the Glu215.

Belongs to the glycosyl hydrolase 11 (cellulase G) family.

It localises to the secreted. It carries out the reaction Endohydrolysis of (1-&gt;4)-beta-D-xylosidic linkages in xylans.. It participates in glycan degradation; xylan degradation. In terms of biological role, endo-1,4-beta-xylanase involved in the hydrolysis of xylan, a major structural heterogeneous polysaccharide found in plant biomass representing the second most abundant polysaccharide in the biosphere, after cellulose. In Aspergillus fumigatus (strain CBS 144.89 / FGSC A1163 / CEA10) (Neosartorya fumigata), this protein is Probable endo-1,4-beta-xylanase A (xlnA).